The primary structure comprises 186 residues: Ribonuclease M5 (186 aa).

The Toprim domain maps to K4–G94. E10, D56, and D58 together coordinate Mg(2+).

Belongs to the ribonuclease M5 family. Requires ribosomal protein L18 (rplR) for catalysis; it can be replaced by 30% dimethylsulfoxide suggesting L18 functions as an rRNA folding chaperone. Mg(2+) is required as a cofactor. The cofactor is Mn(2+). Ca(2+) serves as cofactor.

The protein localises to the cytoplasm. The enzyme catalyses Endonucleolytic cleavage of RNA, removing 21 and 42 nucleotides, respectively, from the 5'- and 3'-termini of a 5S-rRNA precursor.. Functionally, required for correct processing of both the 5' and 3' ends of 5S rRNA precursor. Cleaves both sides of a double-stranded region yielding mature 5S rRNA in one step. Releases 5'-phosphoryl and 3'-hydroxy termini. The protein is Ribonuclease M5 of Bacillus subtilis (strain 168).